The sequence spans 262 residues: Phosphoribosylformylglycinamidine synthase subunit PurQ (262 aa).

One can recognise a Glutamine amidotransferase type-1 domain in the interval 2–238 (RIAVIQFPGT…FAWQLPRKHP (237 aa)). The Nucleophile role is filled by Cys-87. Catalysis depends on residues His-223 and Glu-225.

As to quaternary structure, part of the FGAM synthase complex composed of 1 PurL, 1 PurQ and 2 PurS subunits.

It is found in the cytoplasm. The catalysed reaction is N(2)-formyl-N(1)-(5-phospho-beta-D-ribosyl)glycinamide + L-glutamine + ATP + H2O = 2-formamido-N(1)-(5-O-phospho-beta-D-ribosyl)acetamidine + L-glutamate + ADP + phosphate + H(+). The enzyme catalyses L-glutamine + H2O = L-glutamate + NH4(+). Its pathway is purine metabolism; IMP biosynthesis via de novo pathway; 5-amino-1-(5-phospho-D-ribosyl)imidazole from N(2)-formyl-N(1)-(5-phospho-D-ribosyl)glycinamide: step 1/2. Functionally, part of the phosphoribosylformylglycinamidine synthase complex involved in the purines biosynthetic pathway. Catalyzes the ATP-dependent conversion of formylglycinamide ribonucleotide (FGAR) and glutamine to yield formylglycinamidine ribonucleotide (FGAM) and glutamate. The FGAM synthase complex is composed of three subunits. PurQ produces an ammonia molecule by converting glutamine to glutamate. PurL transfers the ammonia molecule to FGAR to form FGAM in an ATP-dependent manner. PurS interacts with PurQ and PurL and is thought to assist in the transfer of the ammonia molecule from PurQ to PurL. This is Phosphoribosylformylglycinamidine synthase subunit PurQ from Methanothrix thermoacetophila (strain DSM 6194 / JCM 14653 / NBRC 101360 / PT) (Methanosaeta thermophila).